A 214-amino-acid chain; its full sequence is Nucleoside triphosphate pyrophosphatase (214 aa).

The active-site Proton acceptor is the Asp79.

This sequence belongs to the Maf family. Requires a divalent metal cation as cofactor.

The protein localises to the cytoplasm. The catalysed reaction is a ribonucleoside 5'-triphosphate + H2O = a ribonucleoside 5'-phosphate + diphosphate + H(+). It catalyses the reaction a 2'-deoxyribonucleoside 5'-triphosphate + H2O = a 2'-deoxyribonucleoside 5'-phosphate + diphosphate + H(+). In terms of biological role, nucleoside triphosphate pyrophosphatase. May have a dual role in cell division arrest and in preventing the incorporation of modified nucleotides into cellular nucleic acids. The chain is Nucleoside triphosphate pyrophosphatase from Rhodococcus jostii (strain RHA1).